A 1628-amino-acid polypeptide reads, in one-letter code: Centrosomal protein of 170 kDa protein B (1628 aa).

One can recognise an FHA domain in the interval 23 to 73 (IFVGREDCELMLQSRSVDKQHAVINYDSDKDEHRVKDLGSLNGTFVNDVRI). 12 disordered regions span residues 136 to 201 (EHGA…DMTQ), 329 to 369 (LIRR…SEDP), 415 to 504 (PRKK…GKNY), 566 to 586 (SDVR…DAGT), 637 to 659 (LASE…KLSN), 719 to 739 (EHQG…LPQL), 758 to 842 (ESQR…KKST), 1005 to 1084 (VSLV…LDFT), 1100 to 1341 (TVSS…EDEQ), 1379 to 1405 (AGDG…TPAS), 1443 to 1463 (GSTG…DPSK), and 1560 to 1628 (HLDV…TYIV). Basic and acidic residues-rich tracts occupy residues 147-156 (KQDKADKKAT) and 180-201 (KLDK…DMTQ). Residues 421–434 (QSFTHNANSPQNDT) show a composition bias toward polar residues. Basic and acidic residues predominate over residues 436–453 (PVLKAKAEKRKGTLHVEK). The segment covering 454 to 479 (VSTNGMGSTAPASKSLSSPSFPQRSN) has biased composition (polar residues). Basic and acidic residues predominate over residues 481–490 (FRREKTEDRI). Basic and acidic residues-rich tracts occupy residues 758-773 (ESQR…RISE) and 817-828 (WKGEESHSREPS). Residues 1005–1023 (VSLVSDKNVPSHSQKNRIV) are compositionally biased toward polar residues. The span at 1045–1056 (ARERLSEKRRTV) shows a compositional bias: basic and acidic residues. Residues 1129–1150 (RSSNAQKVQQALTRSNSLSTPR) show a composition bias toward polar residues. A compositionally biased stretch (low complexity) spans 1176–1193 (SNISPGTSSANSSSAKSS). The segment covering 1216-1227 (NVPSDSETTSSV) has biased composition (polar residues). Low complexity-rich tracts occupy residues 1261–1280 (TQKQ…SSST), 1312–1328 (ASTA…SRRQ), and 1381–1398 (DGDS…SISS). Positions 1564 to 1596 (PSSNKKTSSTILTSNPLSRTTNNSAARTESQTP) are enriched in polar residues. Low complexity predominate over residues 1606 to 1618 (SSSSSSRSPGSSF).

It belongs to the CEP170 family.

The protein resides in the cytoplasm. It is found in the cytoskeleton. Its function is as follows. Plays a role in microtubule organization. This Xenopus tropicalis (Western clawed frog) protein is Centrosomal protein of 170 kDa protein B (cep170b).